The chain runs to 290 residues: 30 kDa spicule matrix protein alpha (290 aa).

Residues 1 to 20 (MRGFVYVLVCVLALASFSRA) form the signal peptide. Residues 92-162 (ANMYCGQMHP…YTNWERMTAP (71 aa)) form the C-type lectin domain. N-linked (GlcNAc...) asparagine glycosylation is present at Asn102.

In terms of tissue distribution, accumulates exclusively in mineralized tissues.

Functionally, matrix protein of the sea urchin embryo spicule. The function of the matrix proteins is to direct crystal growth in certain orientations and inhibit growth in others. The protein is 30 kDa spicule matrix protein alpha (SM30A) of Strongylocentrotus purpuratus (Purple sea urchin).